The following is a 425-amino-acid chain: Dual-specificity RNA methyltransferase RlmN (425 aa).

Catalysis depends on Glu136, which acts as the Proton acceptor. The 240-residue stretch at 142-381 folds into the Radical SAM core domain; it reads GDDRGTLCVS…FTAGYASPVR (240 aa). Cys149 and Cys392 are joined by a disulfide. Residues Cys156, Cys160, and Cys163 each coordinate [4Fe-4S] cluster. Residues 218 to 219, Ser250, 272 to 274, and Asn349 each bind S-adenosyl-L-methionine; these read GE and SLH. Cys392 serves as the catalytic S-methylcysteine intermediate.

The protein belongs to the radical SAM superfamily. RlmN family. [4Fe-4S] cluster serves as cofactor.

The protein localises to the cytoplasm. It carries out the reaction adenosine(2503) in 23S rRNA + 2 reduced [2Fe-2S]-[ferredoxin] + 2 S-adenosyl-L-methionine = 2-methyladenosine(2503) in 23S rRNA + 5'-deoxyadenosine + L-methionine + 2 oxidized [2Fe-2S]-[ferredoxin] + S-adenosyl-L-homocysteine. The catalysed reaction is adenosine(37) in tRNA + 2 reduced [2Fe-2S]-[ferredoxin] + 2 S-adenosyl-L-methionine = 2-methyladenosine(37) in tRNA + 5'-deoxyadenosine + L-methionine + 2 oxidized [2Fe-2S]-[ferredoxin] + S-adenosyl-L-homocysteine. Specifically methylates position 2 of adenine 2503 in 23S rRNA and position 2 of adenine 37 in tRNAs. m2A2503 modification seems to play a crucial role in the proofreading step occurring at the peptidyl transferase center and thus would serve to optimize ribosomal fidelity. The protein is Dual-specificity RNA methyltransferase RlmN of Methylorubrum extorquens (strain PA1) (Methylobacterium extorquens).